The following is a 500-amino-acid chain: Oryzalexin D synthase (500 aa).

The helical transmembrane segment at serine 4–leucine 24 threads the bilayer. Residue cysteine 442 participates in heme binding.

The protein belongs to the cytochrome P450 family. Heme is required as a cofactor.

It localises to the membrane. It catalyses the reaction ent-cassa-12,15-diene + reduced [NADPH--hemoprotein reductase] + O2 = ent-11beta-hydroxycassa-12,15-diene + oxidized [NADPH--hemoprotein reductase] + H2O + H(+). The catalysed reaction is ent-sandaracopimaradien-3beta-ol + reduced [NADPH--hemoprotein reductase] + O2 = oryzalexin D + oxidized [NADPH--hemoprotein reductase] + H2O + H(+). Its function is as follows. Enzyme of the diterpenoid metabolism involved in the biosynthesis of both phytocassane and the oryzalexin class of phytoalexins. Can hydroxylate syn-pimaradiene, ent-pimaradiene, ent-sandaracopimaradiene, ent-isokaurene, ent-kaurene, and ent-cassadiene, but no activity with syn-stemodene, syn-stemarene, syn-labdatriene, C11-alpha-hydroxy-ent-cassadiene or syn-pimadien-19-oic acid as substrates. Hydroxylates 3-alpha-hydroxy-ent-sandaracopimaradiene at C-7-beta, resulting in a 3-alpha,7-beta-diol corresponding to oryzalexins D. The protein is Oryzalexin D synthase of Oryza sativa subsp. japonica (Rice).